The primary structure comprises 518 residues: Xylose import ATP-binding protein XylG (518 aa).

ABC transporter domains follow at residues 6–245 (LQMN…VGRE) and 262–507 (FEAR…LSHS). Residue 38 to 45 (GENGAGKS) coordinates ATP.

This sequence belongs to the ABC transporter superfamily. Xylose importer (TC 3.A.1.2.4) family. As to quaternary structure, the complex is composed of two ATP-binding proteins (XylG), two transmembrane proteins (XylH) and a solute-binding protein (XylF).

The protein resides in the cell inner membrane. The catalysed reaction is D-xylose(out) + ATP + H2O = D-xylose(in) + ADP + phosphate + H(+). Its function is as follows. Part of the ABC transporter complex XylFGH involved in xylose import. Responsible for energy coupling to the transport system. This is Xylose import ATP-binding protein XylG from Pseudomonas syringae pv. syringae (strain B728a).